Reading from the N-terminus, the 97-residue chain is Nucleoid-associated protein HPAG1_0033 (97 aa).

This sequence belongs to the YbaB/EbfC family. As to quaternary structure, homodimer.

The protein resides in the cytoplasm. The protein localises to the nucleoid. Functionally, binds to DNA and alters its conformation. May be involved in regulation of gene expression, nucleoid organization and DNA protection. This is Nucleoid-associated protein HPAG1_0033 from Helicobacter pylori (strain HPAG1).